The primary structure comprises 152 residues: Transcriptional regulator MraZ (152 aa).

SpoVT-AbrB domains lie at 5–52 (TSAI…PLPE) and 81–124 (ASDC…HDTA).

The protein belongs to the MraZ family. In terms of assembly, forms oligomers.

It is found in the cytoplasm. It localises to the nucleoid. The sequence is that of Transcriptional regulator MraZ from Colwellia psychrerythraea (strain 34H / ATCC BAA-681) (Vibrio psychroerythus).